The primary structure comprises 322 residues: CRISPR-associated protein Cas1 1 (322 aa).

3 residues coordinate Mn(2+): E149, H214, and E229.

The protein belongs to the CRISPR-associated endonuclease Cas1 family. In terms of assembly, homodimer, forms a heterotetramer with a Cas2 homodimer. Requires Mg(2+) as cofactor. Mn(2+) serves as cofactor.

Its function is as follows. CRISPR (clustered regularly interspaced short palindromic repeat), is an adaptive immune system that provides protection against mobile genetic elements (viruses, transposable elements and conjugative plasmids). CRISPR clusters contain spacers, sequences complementary to antecedent mobile elements, and target invading nucleic acids. CRISPR clusters are transcribed and processed into CRISPR RNA (crRNA). Acts as a dsDNA endonuclease. Involved in the integration of spacer DNA into the CRISPR cassette. The sequence is that of CRISPR-associated protein Cas1 1 from Methanobrevibacter ruminantium (strain ATCC 35063 / DSM 1093 / JCM 13430 / OCM 146 / M1) (Methanobacterium ruminantium).